The chain runs to 274 residues: 2,3,4,5-tetrahydropyridine-2,6-dicarboxylate N-succinyltransferase (274 aa).

Residues Arg104 and Asp141 each coordinate substrate.

The protein belongs to the transferase hexapeptide repeat family. In terms of assembly, homotrimer.

It localises to the cytoplasm. The enzyme catalyses (S)-2,3,4,5-tetrahydrodipicolinate + succinyl-CoA + H2O = (S)-2-succinylamino-6-oxoheptanedioate + CoA. The protein operates within amino-acid biosynthesis; L-lysine biosynthesis via DAP pathway; LL-2,6-diaminopimelate from (S)-tetrahydrodipicolinate (succinylase route): step 1/3. This is 2,3,4,5-tetrahydropyridine-2,6-dicarboxylate N-succinyltransferase from Yersinia pestis.